A 163-amino-acid polypeptide reads, in one-letter code: Crossover junction endodeoxyribonuclease RuvC (163 aa).

Active-site residues include Asp-7, Glu-66, and Asp-139. Asp-7, Glu-66, and Asp-139 together coordinate Mg(2+).

It belongs to the RuvC family. Homodimer which binds Holliday junction (HJ) DNA. The HJ becomes 2-fold symmetrical on binding to RuvC with unstacked arms; it has a different conformation from HJ DNA in complex with RuvA. In the full resolvosome a probable DNA-RuvA(4)-RuvB(12)-RuvC(2) complex forms which resolves the HJ. It depends on Mg(2+) as a cofactor.

The protein resides in the cytoplasm. The catalysed reaction is Endonucleolytic cleavage at a junction such as a reciprocal single-stranded crossover between two homologous DNA duplexes (Holliday junction).. Its function is as follows. The RuvA-RuvB-RuvC complex processes Holliday junction (HJ) DNA during genetic recombination and DNA repair. Endonuclease that resolves HJ intermediates. Cleaves cruciform DNA by making single-stranded nicks across the HJ at symmetrical positions within the homologous arms, yielding a 5'-phosphate and a 3'-hydroxyl group; requires a central core of homology in the junction. The consensus cleavage sequence is 5'-(A/T)TT(C/G)-3'. Cleavage occurs on the 3'-side of the TT dinucleotide at the point of strand exchange. HJ branch migration catalyzed by RuvA-RuvB allows RuvC to scan DNA until it finds its consensus sequence, where it cleaves and resolves the cruciform DNA. The sequence is that of Crossover junction endodeoxyribonuclease RuvC from Thermomicrobium roseum (strain ATCC 27502 / DSM 5159 / P-2).